The primary structure comprises 378 residues: Pre-B-cell leukemia transcription factor 4 (378 aa).

A compositionally biased stretch (pro residues) spans 1-15 (MAAPLRPVPPQPAPR). Disordered regions lie at residues 1–24 (MAAP…APLG) and 100–125 (VSRP…PNDN). In terms of domain architecture, PBC spans 22 to 214 (PLGHDTSDVL…VMTLRSRFLD (193 aa)). The interval 29 to 107 (DVLQQIMAIT…EGVSRPEKRG (79 aa)) is PBC-A. A compositionally biased stretch (low complexity) spans 109 to 120 (GAAAGSTATPGG). The segment at 110–214 (AAAGSTATPG…VMTLRSRFLD (105 aa)) is PBC-B. Positions 215 to 277 (ARRKRRNFSK…NKRIRYKKNT (63 aa)) form a DNA-binding region, homeobox; TALE-type. Disordered stretches follow at residues 291–320 (ASTV…PLPL) and 355–378 (RAAP…AASN). Positions 356 to 370 (AAPQPASSPAGESGS) are enriched in low complexity.

It belongs to the TALE/PBX homeobox family. As to expression, almost exclusively expressed in testis.

The protein resides in the nucleus. The polypeptide is Pre-B-cell leukemia transcription factor 4 (Pbx4) (Mus musculus (Mouse)).